The chain runs to 186 residues: Napin embryo-specific (186 aa).

Positions 1 to 21 are cleaved as a signal peptide; it reads MANKLFLVSATLALFFLLTNA. 2 propeptides span residues 22 to 38 and 77 to 97; these read SVYR…ATNP and PSWT…QQQG.

This sequence belongs to the 2S seed storage albumins family. The mature protein consists of a small and a large chain linked by disulfide bonds. In terms of tissue distribution, cotyledons and the axis.

The small, basic, water-soluble napins are one of the two major kinds of storage proteins synthesized in the seed during its maturation. The chain is Napin embryo-specific from Brassica napus (Rape).